We begin with the raw amino-acid sequence, 282 residues long: Phosphatidylserine decarboxylase proenzyme (282 aa).

Catalysis depends on charge relay system; for autoendoproteolytic cleavage activity residues D88, H144, and S247. Catalysis depends on S247, which acts as the Schiff-base intermediate with substrate; via pyruvic acid; for decarboxylase activity. S247 bears the Pyruvic acid (Ser); by autocatalysis mark.

It belongs to the phosphatidylserine decarboxylase family. PSD-B subfamily. Prokaryotic type I sub-subfamily. In terms of assembly, heterodimer of a large membrane-associated beta subunit and a small pyruvoyl-containing alpha subunit. It depends on pyruvate as a cofactor. In terms of processing, is synthesized initially as an inactive proenzyme. Formation of the active enzyme involves a self-maturation process in which the active site pyruvoyl group is generated from an internal serine residue via an autocatalytic post-translational modification. Two non-identical subunits are generated from the proenzyme in this reaction, and the pyruvate is formed at the N-terminus of the alpha chain, which is derived from the carboxyl end of the proenzyme. The autoendoproteolytic cleavage occurs by a canonical serine protease mechanism, in which the side chain hydroxyl group of the serine supplies its oxygen atom to form the C-terminus of the beta chain, while the remainder of the serine residue undergoes an oxidative deamination to produce ammonia and the pyruvoyl prosthetic group on the alpha chain. During this reaction, the Ser that is part of the protease active site of the proenzyme becomes the pyruvoyl prosthetic group, which constitutes an essential element of the active site of the mature decarboxylase.

Its subcellular location is the cell membrane. The catalysed reaction is a 1,2-diacyl-sn-glycero-3-phospho-L-serine + H(+) = a 1,2-diacyl-sn-glycero-3-phosphoethanolamine + CO2. The protein operates within phospholipid metabolism; phosphatidylethanolamine biosynthesis; phosphatidylethanolamine from CDP-diacylglycerol: step 2/2. Functionally, catalyzes the formation of phosphatidylethanolamine (PtdEtn) from phosphatidylserine (PtdSer). This chain is Phosphatidylserine decarboxylase proenzyme, found in Xanthomonas campestris pv. campestris (strain 8004).